A 293-amino-acid chain; its full sequence is tRNA pseudouridine synthase B (293 aa).

Asp38 serves as the catalytic Nucleophile.

The protein belongs to the pseudouridine synthase TruB family. Type 1 subfamily.

The catalysed reaction is uridine(55) in tRNA = pseudouridine(55) in tRNA. In terms of biological role, responsible for synthesis of pseudouridine from uracil-55 in the psi GC loop of transfer RNAs. This chain is tRNA pseudouridine synthase B, found in Solibacter usitatus (strain Ellin6076).